We begin with the raw amino-acid sequence, 488 residues long: Elongation factor Tu, chloroplastic (488 aa).

The disordered stretch occupies residues 1-20 (MALSSTAATTSSKLKLSNPP). A chloroplast-targeting transit peptide spans 1 to 79 (MALSSTAATT…RPSSSPFTVR (79 aa)). The tr-type G domain maps to 89–293 (KPHLNIGTIG…EVDKYIPIPQ (205 aa)). Residues 98-105 (GHVDHGKT) are G1. 98 to 105 (GHVDHGKT) is a GTP binding site. The segment at 139 to 143 (GITIN) is G2. The interval 160 to 163 (DCPG) is G3. Residues 160–164 (DCPGH) and 215–218 (NKQD) each bind GTP. Residues 215–218 (NKQD) are G4. Residues 253 to 255 (SAL) form a G5 region.

It belongs to the TRAFAC class translation factor GTPase superfamily. Classic translation factor GTPase family. EF-Tu/EF-1A subfamily. As to expression, higher expression in leaves than in roots.

Its subcellular location is the plastid. It localises to the chloroplast. In terms of biological role, this protein promotes the GTP-dependent binding of aminoacyl-tRNA to the A-site of ribosomes during protein biosynthesis. The polypeptide is Elongation factor Tu, chloroplastic (tufA) (Pisum sativum (Garden pea)).